A 272-amino-acid polypeptide reads, in one-letter code: Large ribosomal subunit protein uL29m (272 aa).

3 disordered regions span residues 1-29 (MAAA…PLTQ), 56-87 (KHRG…PRNK), and 227-272 (AAAT…TPRL). Positions 17–29 (SSSTPSPLRPLTQ) are enriched in low complexity. 2 stretches are compositionally biased toward low complexity: residues 227–238 (AAATEGEQQAAE) and 249–259 (PATAATPESAT). Residues 260 to 272 (IPSSQQQTDTPRL) are compositionally biased toward polar residues.

This sequence belongs to the universal ribosomal protein uL29 family. Component of the mitochondrial large ribosomal subunit. Mature mitochondrial ribosomes consist of a small (37S) and a large (54S) subunit. The 37S subunit contains at least 33 different proteins and 1 molecule of RNA (15S). The 54S subunit contains at least 45 different proteins and 1 molecule of RNA (21S).

It localises to the mitochondrion. This chain is Large ribosomal subunit protein uL29m (MRPL4), found in Chaetomium globosum (strain ATCC 6205 / CBS 148.51 / DSM 1962 / NBRC 6347 / NRRL 1970) (Soil fungus).